Here is a 412-residue protein sequence, read N- to C-terminus: Serine hydroxymethyltransferase (412 aa).

Residues Leu117 and 121 to 123 (GHL) contribute to the (6S)-5,6,7,8-tetrahydrofolate site. Lys226 is modified (N6-(pyridoxal phosphate)lysine). (6S)-5,6,7,8-tetrahydrofolate-binding positions include Glu242 and 350–352 (SPF).

Belongs to the SHMT family. In terms of assembly, homodimer. The cofactor is pyridoxal 5'-phosphate.

The protein resides in the cytoplasm. It carries out the reaction (6R)-5,10-methylene-5,6,7,8-tetrahydrofolate + glycine + H2O = (6S)-5,6,7,8-tetrahydrofolate + L-serine. It participates in one-carbon metabolism; tetrahydrofolate interconversion. Its pathway is amino-acid biosynthesis; glycine biosynthesis; glycine from L-serine: step 1/1. Its function is as follows. Catalyzes the reversible interconversion of serine and glycine with tetrahydrofolate (THF) serving as the one-carbon carrier. Appears to be specific for THF as the pteridine substrate, since the use of tetrahydromethanopterin (H4MPT) is much less efficient. Also exhibits THF-independent aldolase activity toward beta-hydroxyamino acids, producing glycine and aldehydes, via a retro-aldol mechanism. Thus, is able to catalyze the cleavage of L-allo-threonine and L-threo-beta-phenylserine. The protein is Serine hydroxymethyltransferase of Methanosarcina barkeri (strain Fusaro / DSM 804).